A 387-amino-acid polypeptide reads, in one-letter code: 3-dehydroquinate synthase (387 aa).

It belongs to the archaeal-type DHQ synthase family.

It catalyses the reaction 2-amino-2,3,7-trideoxy-D-lyxo-hept-6-ulosonate + NAD(+) + H2O = 3-dehydroquinate + NH4(+) + NADH + H(+). Catalyzes the oxidative deamination and cyclization of 2-amino-3,7-dideoxy-D-threo-hept-6-ulosonic acid (ADH) to yield 3-dehydroquinate (DHQ), which is fed into the canonical shikimic pathway of aromatic amino acid biosynthesis. The chain is 3-dehydroquinate synthase from Halobacterium salinarum (strain ATCC 29341 / DSM 671 / R1).